We begin with the raw amino-acid sequence, 27 residues long: Cruzioseptin-14 (27 aa).

In terms of tissue distribution, expressed by the skin glands.

It localises to the secreted. Has antimicrobial activity. In Cruziohyla calcarifer (Splendid leaf frog), this protein is Cruzioseptin-14.